Here is a 147-residue protein sequence, read N- to C-terminus: Mineralocorticoid receptor (147 aa).

An NR LBD domain is found at 1–147 (FALSWRSYKH…SQALKVEFPA (147 aa)). The 21-hydroxyprogesterone site is built by R6 and T134. Aldosterone contacts are provided by R6 and T134. Residues R6 and T134 each coordinate progesterone.

The protein belongs to the nuclear hormone receptor family. NR3 subfamily.

It localises to the cytoplasm. It is found in the nucleus. Receptor for both mineralocorticoids (MC) such as aldosterone and glucocorticoids (GC) such as corticosterone or cortisol. Binds to mineralocorticoid response elements (MRE) and transactivates target genes. The effect of MC is to increase ion and water transport and thus raise extracellular fluid volume and blood pressure and lower potassium levels. This is Mineralocorticoid receptor (NR3C2) from Gallus gallus (Chicken).